A 122-amino-acid chain; its full sequence is UPF0102 protein DIP1513 (122 aa).

Belongs to the UPF0102 family.

The protein is UPF0102 protein DIP1513 of Corynebacterium diphtheriae (strain ATCC 700971 / NCTC 13129 / Biotype gravis).